The chain runs to 427 residues: Gamma-glutamyl phosphate reductase (427 aa).

This sequence belongs to the gamma-glutamyl phosphate reductase family.

It localises to the cytoplasm. It carries out the reaction L-glutamate 5-semialdehyde + phosphate + NADP(+) = L-glutamyl 5-phosphate + NADPH + H(+). The protein operates within amino-acid biosynthesis; L-proline biosynthesis; L-glutamate 5-semialdehyde from L-glutamate: step 2/2. Catalyzes the NADPH-dependent reduction of L-glutamate 5-phosphate into L-glutamate 5-semialdehyde and phosphate. The product spontaneously undergoes cyclization to form 1-pyrroline-5-carboxylate. The protein is Gamma-glutamyl phosphate reductase of Rhizobium rhizogenes (strain K84 / ATCC BAA-868) (Agrobacterium radiobacter).